The primary structure comprises 645 residues: Glucans biosynthesis glucosyltransferase H (645 aa).

Positions 1–28 (MDGTVTLSPAPTDLPPVSSLDAGQPTLP) are disordered. Helical transmembrane passes span 64-84 (LIGG…SVLW), 98-118 (LFVL…AGFI), 423-443 (APMW…GAGI), 465-485 (AIWI…LGYI), 504-524 (ALSI…VMYL), 558-578 (SYGG…LVSP), and 580-600 (LAAW…VVAV).

It belongs to the glycosyltransferase 2 family. OpgH subfamily.

It is found in the cell inner membrane. Its pathway is glycan metabolism; osmoregulated periplasmic glucan (OPG) biosynthesis. Functionally, involved in the biosynthesis of osmoregulated periplasmic glucans (OPGs). The chain is Glucans biosynthesis glucosyltransferase H from Xanthomonas campestris pv. campestris (strain B100).